Consider the following 92-residue polypeptide: UPF0223 protein SSA_0938 (92 aa).

Belongs to the UPF0223 family.

This is UPF0223 protein SSA_0938 from Streptococcus sanguinis (strain SK36).